The sequence spans 417 residues: Squamosa promoter-binding-like protein 14 (417 aa).

Gly residues-rich tracts occupy residues 1 to 26 (MEMASGGGAAAAAGGGVGGSGGGGGG) and 51 to 60 (AGGGGTGSGS). Disordered regions lie at residues 1-32 (MEMASGGGAAAAAGGGVGGSGGGGGGGDEHRQ) and 51-102 (AGGG…PPPP). Positions 61-74 (GSASAAPPSSSSKA) are enriched in low complexity. A compositionally biased stretch (gly residues) spans 75 to 84 (AGGGRGGGGK). The SBP-type zinc finger occupies 101–178 (PPRCQVEGCG…AGHNERRRRP (78 aa)). Positions 104, 109, 126, 129, 145, 148, and 152 each coordinate Zn(2+). The short motif at 161 to 177 (KRSCRRRLAGHNERRRR) is the Bipartite nuclear localization signal element. Phosphoserine is present on Ser163. Cys164 is a Zn(2+) binding site. A disordered region spans residues 387–417 (LQGNGPAPAPRIDPGSGSTFDQTSNTMDWSL). Residues 402-417 (SGSTFDQTSNTMDWSL) are compositionally biased toward polar residues.

Interacts with PCF1 and PCF2. Interacts with IPI1. Interacts with D53. Interacts with SLR1. Interacts (via C-terminus) with SHI1. Post-translationally, phosphorylated at Ser-163 in response to infection by the fungal pathogen Magnaporthe oryzae. In terms of processing, ubiquitinated by IPI1, which leads to proteasomal degradation. Expressed in young panicles. Expressed in the shoot apex at both the vegetative and reproductive stages. Highly expressed in the promordia of primary and secondary branches. Highly expressed in young panicles.

The protein localises to the nucleus. Transcriptional activator that binds to the SBP-box DNA core binding motif 5'-GTAC-3'. Can target the TCP motif 5'-TGGGCC/T-3' through interaction with PCF1 and PCF2. Key regulator of the plant architecture that controls shoot branching and panicle development. Promotes panicle branching. Promotes high grain yield. Binds to the promoters of TB1 and DEP1. Suppresses rice tillering mainly through positive regulation of TB1. Regulates plant height and panicle length through positive regulation of DEP1. Repressed by D53 in strigolactone (SL) signaling. Acts with D53 to mediate the SL-regulated tiller development. Functions as a direct downstream component of D53 in regulating tiller number and SL-induced gene expression. Binds directly to the D53 promoter and plays a critical role in the negative feedback regulation of SL-induced D53 expression. Involved in defense response against pathogens. Phosphorylated at Ser-163 in response to infection by the fungal pathogen Magnaporthe oryzae. Phosphorylation reduces SPL14/IPA1 binding to the GTAC site in the DEP1 promoter and enhances binding to the TGGGCC site in the WRKY45 promoter. Binding to the promoter of the pathogen defense gene WRKY45 activates its expression, leading to enhanced disease resistance. Reduces gibberellin-mediated disease susceptibility by stabilizing SLR1. Possesses transactivation activity in yeast cells. This chain is Squamosa promoter-binding-like protein 14, found in Oryza sativa subsp. japonica (Rice).